Reading from the N-terminus, the 25-residue chain is Kunitz-type serine protease inhibitor RsTIS5 (25 aa).

Residues 1–25 (EAEPKPFNPVCYEPKEVGPCKAYVP) enclose the BPTI/Kunitz inhibitor domain.

Serine protease inhibitor. Inhibits trypsin, elastase and plasmin. Does not inhibit kallikrein. This is Kunitz-type serine protease inhibitor RsTIS5 from Rhipicephalus sanguineus (Brown dog tick).